We begin with the raw amino-acid sequence, 416 residues long: Neurotensin receptor type 2 (416 aa).

At 1–32 (METSSLWPPRPSPSAGLSLEARLGVDTRLWAK) the chain is on the extracellular side. The helical transmembrane segment at 33 to 55 (VLFTALYSLIFALGTAGNALSVH) threads the bilayer. Topologically, residues 56–64 (VVLKARAGR) are cytoplasmic. The helical transmembrane segment at 65–87 (PGRLRYHVLSLALSALLLLLISV) threads the bilayer. Residues 88-109 (PMELYNFVWSHYPWVFGDLGCR) are Extracellular-facing. An intrachain disulfide couples cysteine 108 to cysteine 194. The chain crosses the membrane as a helical span at residues 110–131 (GYYFVRELCAYATVLSVASLSA). At 132–154 (ERCLAVCQPLRARRLLTPRRTRR) the chain is on the cytoplasmic side. The helical transmembrane segment at 155–176 (LLSLVWVASLGLALPMAVIMGQ) threads the bilayer. At 177-217 (KHEMERADGEPEPASRVCTVLVSRATLQVFIQVNVLVSFVL) the chain is on the extracellular side. A helical membrane pass occupies residues 218 to 237 (PLALTAFLNGITVNHLVALY). Residues 238–297 (SQVPSASAQVNSIPSRLELLSEEGLLGFITWRKTLSLGVQASLVRHKDASQIRSLQHSAQ) lie on the Cytoplasmic side of the membrane. A helical membrane pass occupies residues 298-318 (VLRAIVAVYVICWLPYHARRL). Residues 319 to 337 (MYCYIPDDGWTDELYDFYH) lie on the Extracellular side of the membrane. Residues 338 to 358 (YFYMVTNTLFYVSSAVTPVLY) form a helical membrane-spanning segment. Topologically, residues 359 to 416 (NAVSSSFRKLFLESLSSLCGEQRSVVPLPQEAPESTTSTYSFRLWGSPRNPSLGEIQV) are cytoplasmic. Residue cysteine 377 is the site of S-palmitoyl cysteine attachment. Serine 410 is subject to Phosphoserine.

This sequence belongs to the G-protein coupled receptor 1 family. Neurotensin receptor subfamily. NTSR2 sub-subfamily. Expressed maximally in the cerebellum, hippocampus, piriform cortex and neocortex of adult brain.

The protein resides in the cell membrane. Receptor for the tridecapeptide neurotensin. It is associated with G proteins that activate a phosphatidylinositol-calcium second messenger system. This Mus musculus (Mouse) protein is Neurotensin receptor type 2 (Ntsr2).